The sequence spans 299 residues: Putative fructokinase (299 aa).

An ATP-binding site is contributed by Thr-130. Positions 153, 168, 171, and 174 each coordinate Zn(2+). ATP is bound by residues Pro-182 and 230–234; that span reads GVMQQ.

The protein belongs to the ROK (NagC/XylR) family. The cofactor is Mg(2+).

The enzyme catalyses D-fructose + ATP = D-fructose 6-phosphate + ADP + H(+). Its activity is regulated as follows. Inhibited by zinc ions. Its function is as follows. Seems to be involved in the degradation of glucomannan. This chain is Putative fructokinase (gmuE), found in Bacillus subtilis (strain 168).